The primary structure comprises 323 residues: DNA-directed RNA polymerase subunit alpha 1 (323 aa).

An alpha N-terminal domain (alpha-NTD) region spans residues 1–228; sequence MSNNNSKQEF…EQISVFVSLR (228 aa). The alpha C-terminal domain (alpha-CTD) stretch occupies residues 244–323; sequence IDPILLKPID…DNFRELVEGK (80 aa).

This sequence belongs to the RNA polymerase alpha chain family. As to quaternary structure, homodimer. The RNAP catalytic core consists of 2 alpha, 1 beta, 1 beta' and 1 omega subunit. When a sigma factor is associated with the core the holoenzyme is formed, which can initiate transcription.

The enzyme catalyses RNA(n) + a ribonucleoside 5'-triphosphate = RNA(n+1) + diphosphate. In terms of biological role, DNA-dependent RNA polymerase catalyzes the transcription of DNA into RNA using the four ribonucleoside triphosphates as substrates. In Francisella tularensis subsp. novicida (strain U112), this protein is DNA-directed RNA polymerase subunit alpha 1.